Reading from the N-terminus, the 244-residue chain is 3-oxoacyl-[acyl-carrier-protein] reductase FabG (244 aa).

Residues 12 to 15 (GASR) and threonine 37 contribute to the NADP(+) site. 2 residues coordinate Ca(2+): glycine 50 and glycine 53. Residues 59–60 (NV) and asparagine 86 contribute to the NADP(+) site. Residue serine 138 participates in substrate binding. Asparagine 145 provides a ligand contact to Ca(2+). Residue tyrosine 151 is the Proton acceptor of the active site. NADP(+)-binding positions include 151 to 155 (YAAAK) and isoleucine 184. 2 residues coordinate Ca(2+): glutamate 233 and threonine 234.

The protein belongs to the short-chain dehydrogenases/reductases (SDR) family. As to quaternary structure, homotetramer.

It catalyses the reaction a (3R)-hydroxyacyl-[ACP] + NADP(+) = a 3-oxoacyl-[ACP] + NADPH + H(+). It carries out the reaction 3-oxobutanoyl-[ACP] + NADPH + H(+) = (3R)-hydroxybutanoyl-[ACP] + NADP(+). The catalysed reaction is 3-oxopentanoyl-[ACP] + NADPH + H(+) = (3R)-hydroxypentanoyl-[ACP] + NADP(+). The enzyme catalyses 3-oxohexanoyl-[ACP] + NADPH + H(+) = (3R)-hydroxyhexanoyl-[ACP] + NADP(+). It catalyses the reaction 3-oxoheptanoyl-[ACP] + NADPH + H(+) = (3R)-hydroxyheptanoyl-[ACP] + NADP(+). It carries out the reaction 3-oxooctanoyl-[ACP] + NADPH + H(+) = (3R)-hydroxyoctanoyl-[ACP] + NADP(+). The catalysed reaction is 3-oxononanoyl-[ACP] + NADPH + H(+) = (3R)-hydroxynonanoyl-[ACP] + NADP(+). The enzyme catalyses 3-oxodecanoyl-[ACP] + NADPH + H(+) = (3R)-hydroxydecanoyl-[ACP] + NADP(+). It catalyses the reaction 3-oxohexadecanoyl-[ACP] + NADPH + H(+) = (3R)-hydroxyhexadecanoyl-[ACP] + NADP(+). It carries out the reaction 3-oxo-(9Z)-hexadecenoyl-[ACP] + NADPH + H(+) = (3R)-hydroxy-(9Z)-hexadecenoyl-[ACP] + NADP(+). The catalysed reaction is 4-methyl-3-oxopentanoyl-[ACP] + NADPH + H(+) = (3R)-hydroxy-4-methylpentanoyl-[ACP] + NADP(+). The enzyme catalyses 5-methyl-3-oxohexanoyl-[ACP] + NADPH + H(+) = (3R)-hydroxy-5-methylhexanoyl-[ACP] + NADP(+). It catalyses the reaction 4-methyl-3-oxohexanoyl-[ACP] + NADPH + H(+) = (3R)-hydroxy-4-methylhexanoyl-[ACP] + NADP(+). The protein operates within lipid metabolism; fatty acid biosynthesis. With respect to regulation, inhibited by cinnamic acid derivatives. In terms of biological role, catalyzes the NADPH-dependent reduction of beta-ketoacyl-ACP substrates to beta-hydroxyacyl-ACP products, the first reductive step in the elongation cycle of fatty acid biosynthesis. This Escherichia coli (strain K12) protein is 3-oxoacyl-[acyl-carrier-protein] reductase FabG (fabG).